A 194-amino-acid polypeptide reads, in one-letter code: Casparian strip membrane protein 2 (194 aa).

The Cytoplasmic portion of the chain corresponds to 1–32 (MSTTIDIPESSKVVKGKGVVAAPLRPGGWKKG). A helical transmembrane segment spans residues 33 to 53 (VAIMDFILRLGAIAAALGAAA). Residues 54-82 (TMGTSDQTLPFFTQFFQFEASYDSFTTFQ) lie on the Extracellular side of the membrane. The chain crosses the membrane as a helical span at residues 83–103 (FFVITMALVGGYLVLSLPFSV). The Cytoplasmic segment spans residues 104-115 (VAIIRPHAVGPR). A helical membrane pass occupies residues 116-136 (LFLIILDTVFLTLATASAASA). At 137 to 168 (AAVVYLAHNGDQDTNWLAICNQFGDFCAQTSS) the chain is on the extracellular side. Residues 169–189 (AVVSSFVAVVVFVLLIVMSAL) traverse the membrane as a helical segment. Residues 190–194 (AMGKP) are Cytoplasmic-facing.

It belongs to the Casparian strip membrane proteins (CASP) family. As to quaternary structure, homodimer and heterodimers.

Its subcellular location is the cell membrane. In terms of biological role, regulates membrane-cell wall junctions and localized cell wall deposition. Required for establishment of the Casparian strip membrane domain (CSD) and the subsequent formation of Casparian strips, a cell wall modification of the root endodermis that determines an apoplastic barrier between the intraorganismal apoplasm and the extraorganismal apoplasm and prevents lateral diffusion. In Vigna unguiculata (Cowpea), this protein is Casparian strip membrane protein 2.